The primary structure comprises 163 residues: Probable chemoreceptor glutamine deamidase CheD (163 aa).

Belongs to the CheD family.

It carries out the reaction L-glutaminyl-[protein] + H2O = L-glutamyl-[protein] + NH4(+). Probably deamidates glutamine residues to glutamate on methyl-accepting chemotaxis receptors (MCPs), playing an important role in chemotaxis. The polypeptide is Probable chemoreceptor glutamine deamidase CheD (Borrelia turicatae (strain 91E135)).